Consider the following 426-residue polypeptide: Serine--tRNA ligase (426 aa).

Residue 231–233 (TAE) participates in L-serine binding. ATP is bound by residues 262 to 264 (RRE) and valine 278. Residue glutamate 285 coordinates L-serine. Residue 349–352 (EVSS) coordinates ATP. Residue serine 384 coordinates L-serine.

It belongs to the class-II aminoacyl-tRNA synthetase family. Type-1 seryl-tRNA synthetase subfamily. In terms of assembly, homodimer. The tRNA molecule binds across the dimer.

It localises to the cytoplasm. The enzyme catalyses tRNA(Ser) + L-serine + ATP = L-seryl-tRNA(Ser) + AMP + diphosphate + H(+). The catalysed reaction is tRNA(Sec) + L-serine + ATP = L-seryl-tRNA(Sec) + AMP + diphosphate + H(+). It participates in aminoacyl-tRNA biosynthesis; selenocysteinyl-tRNA(Sec) biosynthesis; L-seryl-tRNA(Sec) from L-serine and tRNA(Sec): step 1/1. Functionally, catalyzes the attachment of serine to tRNA(Ser). Is also able to aminoacylate tRNA(Sec) with serine, to form the misacylated tRNA L-seryl-tRNA(Sec), which will be further converted into selenocysteinyl-tRNA(Sec). The chain is Serine--tRNA ligase from Chlamydia caviae (strain ATCC VR-813 / DSM 19441 / 03DC25 / GPIC) (Chlamydophila caviae).